We begin with the raw amino-acid sequence, 493 residues long: 11S globulin seed storage protein G3 (493 aa).

The N-terminal stretch at 1 to 20 (MASKATLLLAFTLLFATCIA) is a signal peptide. Cystine bridges form between C32-C65 and C103-C312. Residues 37–248 (IEALEPIEVI…SFNVDQETAQ (212 aa)) form the Cupin type-1 1 domain. Disordered stretches follow at residues 190–229 (PQAQ…NIFN) and 269–305 (IVRP…GWSN). Low complexity-rich tracts occupy residues 191-221 (QAQA…QGQG) and 280-298 (RQQQ…QQQG). Residues 318–467 (VNIDNPSQAD…RYQLSREEAQ (150 aa)) form the Cupin type-1 2 domain.

This sequence belongs to the 11S seed storage protein (globulins) family. Hexamer; each subunit is composed of an acidic and a basic chain derived from a single precursor and linked by a disulfide bond.

Functionally, this is a seed storage protein. This Helianthus annuus (Common sunflower) protein is 11S globulin seed storage protein G3 (HAG3).